The following is a 247-amino-acid chain: 23S rRNA (guanosine-2'-O-)-methyltransferase RlmB (247 aa).

S-adenosyl-L-methionine contacts are provided by glycine 197, isoleucine 217, and leucine 226.

This sequence belongs to the class IV-like SAM-binding methyltransferase superfamily. RNA methyltransferase TrmH family. RlmB subfamily.

It is found in the cytoplasm. The enzyme catalyses guanosine(2251) in 23S rRNA + S-adenosyl-L-methionine = 2'-O-methylguanosine(2251) in 23S rRNA + S-adenosyl-L-homocysteine + H(+). Its function is as follows. Specifically methylates the ribose of guanosine 2251 in 23S rRNA. This is 23S rRNA (guanosine-2'-O-)-methyltransferase RlmB from Vibrio parahaemolyticus serotype O3:K6 (strain RIMD 2210633).